The chain runs to 631 residues: Forkhead box protein O1 (631 aa).

Positions 1–11 (MAEAPQPPPPL) are enriched in pro residues. 4 disordered regions span residues 1-57 (MAEA…PAAG), 90-147 (DIRQ…SRRN), 223-324 (SSWW…MPEQ), and 372-404 (PNSS…PNSE). 2 stretches are compositionally biased toward low complexity: residues 37–48 (NPSSSANSSPAP) and 100–135 (QQQQ…PLGA). The fork-head DNA-binding region spans 149 to 243 (WGNLSYADLI…KNGKSPRRRA (95 aa)). A compositionally biased stretch (basic residues) spans 253–264 (AKSRGRAAKKKA). Low complexity predominate over residues 265 to 282 (SMQSSQDGSSDSPGSQFS). Polar residues-rich tracts occupy residues 303–315 (RPRT…TISG) and 381–403 (ASMM…SPNS).

Post-translationally, phosphorylated by AKT1; insulin-induced. IGF1 rapidly induces phosphorylation of Thr-28, Ser-245 and Ser-308. Phosphorylation of Ser-245 decreases DNA-binding activity and promotes the phosphorylation of Thr-28, and Ser-308, which leads to nuclear exclusion and loss of function. Phosphorylation of Ser-318 is independent of IGF1 and leads to reduced function. In terms of tissue distribution, localized to the animal hemisphere during early cleavage stages. At early tadpole stages, expressed in the branchial arches, pronephros and liver. Within the head, expressed in the forming thyroid gland and in head mesenchyme anterior to the eyes.

It localises to the cytoplasm. The protein resides in the nucleus. Functionally, transcription factor that regulates metabolic homeostasis in response to oxidative stress. Binds to the consensus sequence 5'-TT[G/A]TTTTG-3' and the related Daf-16 family binding element (DBE) with consensus sequence 5'-TT[G/A]TTTAC-3'. Main regulator of redox balance and osteoblast numbers and controls bone mass. Orchestrates the endocrine function of the skeleton in regulating glucose metabolism. Also acts as a key regulator of chondrogenic commitment of skeletal progenitor cells in response to lipid availability: when lipids levels are low, translocates to the nucleus and promotes expression of sox9, which induces chondrogenic commitment and suppresses fatty acid oxidation. Acts synergistically with atf4 to suppress osteocalcin/bglap activity, increasing glucose levels and triggering glucose intolerance and insulin insensitivity. Also suppresses the transcriptional activity of runx2, an upstream activator of osteocalcin/bglap. May act as a positive regulator of apoptosis in cardiac smooth muscle cells as a result of its transcriptional activation of pro-apoptotic genes. This chain is Forkhead box protein O1, found in Xenopus laevis (African clawed frog).